Reading from the N-terminus, the 441-residue chain is 3-oxo-glucose-6-phosphate:glutamate aminotransferase (441 aa).

Position 98–99 (98–99) interacts with substrate; that stretch reads TS. Residue 125–126 coordinates pyridoxal 5'-phosphate; sequence GT. Phe-151 provides a ligand contact to substrate. Pyridoxal 5'-phosphate-binding residues include Gln-225 and Ser-242. Residue 244 to 246 participates in substrate binding; it reads NPY. Lys-247 carries the post-translational modification N6-(pyridoxal phosphate)lysine. Residues Tyr-274 and Lys-282 each coordinate substrate. Asn-292 provides a ligand contact to pyridoxal 5'-phosphate. Tyr-379 is a substrate binding site.

Belongs to the DegT/DnrJ/EryC1 family. In terms of assembly, homodimer. It depends on pyridoxal 5'-phosphate as a cofactor.

It carries out the reaction 3-dehydro-D-glucose 6-phosphate + L-glutamate = D-kanosamine 6-phosphate + 2-oxoglutarate. Its pathway is antibiotic biosynthesis; kanosamine biosynthesis. Its function is as follows. Involved in the biosynthesis of kanosamine (3-amino-3-deoxy-D-glucose), which is known to have antibiotic and antifungal properties, and to be a precursor of the antibiotic neotrehalosadiamine (3,3'-diamino-3,3'-dideoxy-alpha,beta-trehalose (NTD)). Catalyzes the reversible pyridoxal phosphate-dependent transamination of 3-dehydro-alpha-D-glucose 6-phosphate to form alpha-D-kanosamine-6-phosphate. It can only use alpha-anomer and glutamate is the only amino donor. This chain is 3-oxo-glucose-6-phosphate:glutamate aminotransferase (ntdA), found in Bacillus subtilis (strain 168).